The following is a 1087-amino-acid chain: Voltage-gated inwardly rectifying potassium channel KCNH3 (1087 aa).

The Cytoplasmic portion of the chain corresponds to 1–228; it reads MPAMRGLLAP…HCGALRATWD (228 aa). Residues 18–90 enclose the PAS domain; that stretch reads IATRFDGTHS…QQIRKALDEH (73 aa). The 53-residue stretch at 93-145 folds into the PAC domain; that stretch reads FKAELILYRKSGLPFWCLLDVIPIKNEKGEVALFLVSHKDISETKNRGGPDNW. Residues 137-150 are compositionally biased toward basic and acidic residues; it reads KNRGGPDNWKERGG. The segment at 137 to 161 is disordered; the sequence is KNRGGPDNWKERGGGRRRYGRAGSK. The chain crosses the membrane as a helical span at residues 229 to 249; it reads GFILLATLYVAVTVPYSVCVS. Topologically, residues 250–259 are extracellular; it reads TAREPSAARG. A helical transmembrane segment spans residues 260–280; it reads PPSVCDLAVEVLFILDIVLNF. The Cytoplasmic segment spans residues 281–302; the sequence is RTTFVSKSGQVVFAPKSICLHY. The chain crosses the membrane as a helical span at residues 303 to 323; sequence VTTWFLLDVIAALPFDLLHAF. Topologically, residues 324–331 are extracellular; it reads KVNVYVGA. A helical; Voltage-sensor membrane pass occupies residues 332–352; that stretch reads HLLKTVRLLRLLRLLPRLDRY. Over 353–361 the chain is Cytoplasmic; that stretch reads SQYSAVVLT. Residues 362–382 traverse the membrane as a helical segment; it reads LLMAVFALLAHWVACVWFYIG. Residues 383–456 lie on the Extracellular side of the membrane; sequence QQEIENSESE…GGPSLRSAYI (74 aa). Residues 416 to 436 are disordered; sequence SPDGGNSSGQSENCSSSGGGS. Positions 419–431 are enriched in low complexity; the sequence is GGNSSGQSENCSS. 3 N-linked (GlcNAc...) asparagine glycosylation sites follow: Asn421, Asn428, and Asn439. The segment at residues 457–477 is an intramembrane region (pore-forming); the sequence is TSLYFALSSLTSVGFGNVSAN. The Selectivity filter motif lies at 468–473; sequence SVGFGN. Residues 478 to 482 are Extracellular-facing; that stretch reads TDTEK. Residues 483-503 traverse the membrane as a helical segment; the sequence is IFSICTMLIGALMHAVVFGNV. Residues 504 to 1087 are Cytoplasmic-facing; that stretch reads TAIIQRMYAR…QWTQEEGTGV (584 aa). An a nucleoside 3',5'-cyclic phosphate-binding site is contributed by 585–700; it reads LFEAASRGCL…FAPRFSRGLR (116 aa). Disordered stretches follow at residues 733–813 and 975–1061; these read EKET…LQLP and LMAP…PWDP. A compositionally biased stretch (basic residues) spans 776 to 788; the sequence is TAPRPRLGGRGRP.

Belongs to the potassium channel family. H (Eag) (TC 1.A.1.20) subfamily. Kv12.2/KCNH3 sub-subfamily. As to quaternary structure, the potassium channel is probably composed of a homo- or heterotetrameric complex of pore-forming alpha subunits that can associate with modulating beta subunits. Interacts with KCNE1 and KCNE3; these interactions regulate KCNH3 trafficking to the plasma membrane and its subsequent voltage-gated potassium channel activity. In terms of processing, N-glycosylated. N-glycosylation mediates traffick to the cell membrane but is not necessary for voltage-gated potassium channel activity. As to expression, highly expressed in adult and embryonic brain, in particular in cerebellum, brain stem, hippocampus, cortex and striatum. Also found in pituitary.

The protein resides in the cell membrane. The enzyme catalyses K(+)(in) = K(+)(out). Pore-forming (alpha) subunit of a voltage-gated inwardly rectifying potassium channel. Charactherized by a fast rate of activation during depolarization followed by a rapid inactivation at much more depolarized value causing inward rectification due to a C-type inactivation mechanism. Exhibits a rapid recovery from inactivation. This Rattus norvegicus (Rat) protein is Voltage-gated inwardly rectifying potassium channel KCNH3.